The chain runs to 111 residues: MKKRLIGFLVLVPALIMSGITLIEANKKSPLEVIDNIRDEFGIFSVQIGQTDPAITIGMDQTKSEAKLREYLKDNLSREAKEKYKIYILKDDINKLEKEHREYLKANNPNK.

A signal peptide spans 1 to 25 (MKKRLIGFLVLVPALIMSGITLIEA).

This is SPbeta prophage-derived uncharacterized protein YolC (yolC) from Bacillus subtilis (strain 168).